A 199-amino-acid chain; its full sequence is Pyridoxine/pyridoxamine 5'-phosphate oxidase (199 aa).

FMN contacts are provided by residues 44 to 49, 59 to 60, K66, and Q91; these read RTVLLK and YS. Residue K49 coordinates substrate. Y109, R113, and S117 together coordinate substrate. FMN contacts are provided by residues 126 to 127 and W171; that span reads QS. Residue 177–179 coordinates substrate; sequence RLH. R181 serves as a coordination point for FMN.

The protein belongs to the pyridoxamine 5'-phosphate oxidase family. As to quaternary structure, homodimer. The cofactor is FMN.

The enzyme catalyses pyridoxamine 5'-phosphate + O2 + H2O = pyridoxal 5'-phosphate + H2O2 + NH4(+). The catalysed reaction is pyridoxine 5'-phosphate + O2 = pyridoxal 5'-phosphate + H2O2. Its pathway is cofactor metabolism; pyridoxal 5'-phosphate salvage; pyridoxal 5'-phosphate from pyridoxamine 5'-phosphate: step 1/1. The protein operates within cofactor metabolism; pyridoxal 5'-phosphate salvage; pyridoxal 5'-phosphate from pyridoxine 5'-phosphate: step 1/1. Catalyzes the oxidation of either pyridoxine 5'-phosphate (PNP) or pyridoxamine 5'-phosphate (PMP) into pyridoxal 5'-phosphate (PLP). The sequence is that of Pyridoxine/pyridoxamine 5'-phosphate oxidase from Xanthomonas oryzae pv. oryzae (strain KACC10331 / KXO85).